The sequence spans 318 residues: Retinol dehydrogenase 11 (318 aa).

Residues 1-21 traverse the membrane as a helical; Signal-anchor for type II membrane protein segment; that stretch reads MVELMFPLLLLLLPFLLYMAA. Topologically, residues 22-318 are cytoplasmic; the sequence is PQIRKMLSSG…SCDLLGLPID (297 aa). An NADP(+)-binding site is contributed by 48–54; that stretch reads GANTGIG. The residue at position 112 (Lys112) is an N6-acetyllysine. Substrate is bound at residue Ser177. The Proton acceptor role is filled by Tyr202.

This sequence belongs to the short-chain dehydrogenases/reductases (SDR) family. In terms of assembly, interacts with SELENOF. Not glycosylated. Predominantly expressed in the epithelial cells of prostate, in both basal and luminal secretory cell populations. Expressed at low levels in spleen, thymus, testis, ovary, small intestine, colon, peripherical blood leukocytes, kidney, adrenal gland and fetal liver. Not detected in prostatic fibromuscular stromal cells, endothelial cells, or infiltrating lymphocytes.

It is found in the endoplasmic reticulum membrane. The catalysed reaction is all-trans-retinol + NADP(+) = all-trans-retinal + NADPH + H(+). It catalyses the reaction 11-cis-retinol + NADP(+) = 11-cis-retinal + NADPH + H(+). It carries out the reaction 9-cis-retinol + NADP(+) = 9-cis-retinal + NADPH + H(+). The enzyme catalyses 13-cis-retinol + NADP(+) = 13-cis-retinal + NADPH + H(+). The protein operates within cofactor metabolism; retinol metabolism. With respect to regulation, SELENOF decreases the retinol dehydrogenase activity. Retinol dehydrogenase with a clear preference for NADP. Displays high activity towards 9-cis, 11-cis and all-trans-retinol, and to a lesser extent on 13-cis-retinol. Exhibits a low reductive activity towards unsaturated medium-chain aldehydes such as cis -6-nonenal and no activity toward nonanal or 4-hydroxy-nonenal. Has no dehydrogenase activity towards steroid. The chain is Retinol dehydrogenase 11 (RDH11) from Homo sapiens (Human).